The chain runs to 183 residues: Ribulose bisphosphate carboxylase small subunit, chloroplastic 4 (183 aa).

The N-terminal 57 residues, 1–57 (MASSLMSNAATTMAAATTTAQANMVAPFNGLKSISAFPVTRKNNDITSVASNGGRVQ), are a transit peptide targeting the chloroplast.

It belongs to the RuBisCO small chain family. In terms of assembly, heterohexadecamer of 8 large and 8 small subunits.

It is found in the plastid. It localises to the chloroplast. RuBisCO catalyzes two reactions: the carboxylation of D-ribulose 1,5-bisphosphate, the primary event in carbon dioxide fixation, as well as the oxidative fragmentation of the pentose substrate. Both reactions occur simultaneously and in competition at the same active site. Although the small subunit is not catalytic it is essential for maximal activity. The protein is Ribulose bisphosphate carboxylase small subunit, chloroplastic 4 of Mesembryanthemum crystallinum (Common ice plant).